Here is a 158-residue protein sequence, read N- to C-terminus: Dihydroneopterin triphosphate diphosphatase (158 aa).

The substrate site is built by Lys-14, Arg-36, and Thr-47. A Nudix hydrolase domain is found at 14 to 153 (KNNQSVLVVI…NNAEAIKKYL (140 aa)). Positions 48–69 (GTIESDETPKKTAIRELWEEVR) match the Nudix box motif. Positions 63 and 67 each coordinate Mg(2+). Residue 88-91 (FEIF) participates in substrate binding. Mg(2+) is bound at residue Glu-124. Ser-142 contributes to the substrate binding site.

The protein belongs to the Nudix hydrolase family. The cofactor is Mg(2+).

The enzyme catalyses 7,8-dihydroneopterin 3'-triphosphate + H2O = 7,8-dihydroneopterin 3'-phosphate + diphosphate + H(+). Its function is as follows. Catalyzes the hydrolysis of dihydroneopterin triphosphate to dihydroneopterin monophosphate and pyrophosphate. Required for efficient folate biosynthesis. Can also hydrolyze nucleoside triphosphates with a preference for dATP. The chain is Dihydroneopterin triphosphate diphosphatase (nudB) from Haemophilus influenzae (strain ATCC 51907 / DSM 11121 / KW20 / Rd).